A 154-amino-acid chain; its full sequence is uncharacterized protein (154 aa).

Disordered regions lie at residues 23-63 (ERVG…VVLK) and 79-154 (IKAA…DENE). Acidic residues predominate over residues 43-56 (PDEDGDHSDKEDEQ). Phosphoserine is present on Ser50. An N6-acetyllysine modification is found at Lys108. At Ser146 the chain carries Phosphoserine.

This is an uncharacterized protein from Homo sapiens (Human).